The chain runs to 215 residues: UPF0502 protein YceH (215 aa).

This sequence belongs to the UPF0502 family.

This is UPF0502 protein YceH from Salmonella paratyphi B (strain ATCC BAA-1250 / SPB7).